The sequence spans 493 residues: Glutamyl-tRNA(Gln) amidotransferase subunit A (493 aa).

Catalysis depends on charge relay system residues lysine 78 and serine 158. The active-site Acyl-ester intermediate is serine 182.

The protein belongs to the amidase family. GatA subfamily. Heterotrimer of A, B and C subunits.

The enzyme catalyses L-glutamyl-tRNA(Gln) + L-glutamine + ATP + H2O = L-glutaminyl-tRNA(Gln) + L-glutamate + ADP + phosphate + H(+). In terms of biological role, allows the formation of correctly charged Gln-tRNA(Gln) through the transamidation of misacylated Glu-tRNA(Gln) in organisms which lack glutaminyl-tRNA synthetase. The reaction takes place in the presence of glutamine and ATP through an activated gamma-phospho-Glu-tRNA(Gln). This Beijerinckia indica subsp. indica (strain ATCC 9039 / DSM 1715 / NCIMB 8712) protein is Glutamyl-tRNA(Gln) amidotransferase subunit A.